A 249-amino-acid chain; its full sequence is uncharacterized protein (249 aa).

11–34 contributes to the NADP(+) binding site; that stretch reads IFGGRSQIGGELARRLAAGATMVL. Substrate is bound at residue Ser142. Residue Tyr155 is the Proton acceptor of the active site.

Belongs to the short-chain dehydrogenases/reductases (SDR) family.

This is an uncharacterized protein from Mycobacterium tuberculosis (strain CDC 1551 / Oshkosh).